Reading from the N-terminus, the 624-residue chain is (-)-beta-phellandrene synthase 2, chloroplastic (624 aa).

The transit peptide at 1-48 (MAIVSSVPLASKSCLHKSLISSIHKLKPFCRTIPTLGMSRPGKYVMPS) directs the protein to the chloroplast. Residues Asp-375, Asp-379, and Asp-527 each contribute to the Mg(2+) site. The short motif at 375–379 (DDMYD) is the DDXXD motif element.

It belongs to the terpene synthase family. Tpsd subfamily. The cofactor is Mg(2+). It depends on Mn(2+) as a cofactor.

It is found in the plastid. It localises to the chloroplast. The catalysed reaction is (2E)-geranyl diphosphate = (-)-beta-phellandrene + diphosphate. The protein operates within terpene metabolism; oleoresin biosynthesis. Its function is as follows. Terpene synthase (TPS) involved in the biosynthesis of monoterpene natural products included in conifer oleoresin secretions and volatile emissions; these compounds contribute to biotic and abiotic stress defense against herbivores and pathogens. Catalyzes the conversion of (2E)-geranyl diphosphate (GPP) to (-)-beta-phellandrene. The protein is (-)-beta-phellandrene synthase 2, chloroplastic of Picea sitchensis (Sitka spruce).